The following is a 79-amino-acid chain: Cytochrome c oxidase assembly factor 6 homolog (79 aa).

Residues 9–52 (RQACWGARDLYWRCLDDNAEDAARCQKLRSSFEASCPQQWIKYF) form the CHCH domain. Positions 12 to 22 (CWGARDLYWRC) match the Cx9C motif motif. Disulfide bonds link Cys-12-Cys-44 and Cys-22-Cys-33. The short motif at 33–44 (CQKLRSSFEASC) is the Cx10C motif element.

This sequence belongs to the cytochrome c oxidase subunit 6B family. In terms of assembly, found in a complex with TMEM177, COX20, MT-CO2/COX2, COX18, SCO1 and SCO2. Interacts with COA1, MT-CO2/COX2, SCO1, SCO2 and COX20. Interacts with COX20 in a MT-CO2/COX2- and COX18-dependent manner. Interacts with COX16.

The protein resides in the mitochondrion. Its subcellular location is the mitochondrion intermembrane space. Functionally, involved in the maturation of the mitochondrial respiratory chain complex IV subunit MT-CO2/COX2. Thereby, may regulate early steps of complex IV assembly. Mitochondrial respiratory chain complex IV or cytochrome c oxidase is the component of the respiratory chain that catalyzes the transfer of electrons from intermembrane space cytochrome c to molecular oxygen in the matrix and as a consequence contributes to the proton gradient involved in mitochondrial ATP synthesis. May also be required for efficient formation of respiratory supercomplexes comprised of complexes III and IV. The chain is Cytochrome c oxidase assembly factor 6 homolog (Coa6) from Mus musculus (Mouse).